The primary structure comprises 910 residues: p53-induced death domain-containing protein 1 (910 aa).

The tract at residues 1-25 is disordered; it reads MAATVEGPELEAAAAAGDASEDSDA. Position 2 is an N-acetylalanine (alanine 2). LRR repeat units follow at residues 126–147, 149–171, 172–194, 195–216, 218–240, 241–263, and 264–285; these read HLAHLDLSFNSLETLPACVLQM, GLGALLLSHNCLSELPEALGALP, ALTFLTVTHNRLQTLPPALGALS, TLQRLDLSQNLLDTLPPEIGGL, SLLELNLASNRLQSLPASLAGLR, SLRLLVLHSNLLASVPADLARLP, and LLTRLDLRDNQLRDLPPELLDA. 2 positions are modified to phosphoserine: serine 299 and serine 305. ZU5 domains lie at 322 to 454 and 455 to 596; these read DLDS…VSRP and VSNA…WYTT. Peptidase S68 stretches follow at residues 423 to 452 and 566 to 594; these read DLETYLEEEAPQRLWAHCQVPHFSWFLVVS and DITAQVVLELTHLYARFQVTHFSWYWLWY. Active-site residues include histidine 444, serine 446, histidine 586, and serine 588. The interval 580-716 is UPA domain; sequence ARFQVTHFSW…TTTLDREAQA (137 aa). A Death domain is found at 788 to 873; it reads TQSNLLSVAG…DVAEEVRAVL (86 aa). Residues 884 to 910 form a disordered region; that stretch reads IRRMGLAPKDPALPGSSAPQPPEPAQA.

Forms a complex named the PIDDosome with CASP2 and CRADD. Forms a complex with IKBKG and RIPK1. Interacts with FADD and MADD. Undergoes autoproteolytic processing whose extent either directs cells towards survival or apoptotic pathways. Autoproteolytically cleaved into two main fragments PIDD-N and PIDD-C. PIDD-C can be further processed into PIDD-CC, a processing which is enhanced by DNA damage. The cleavage producing PIDD-C is required for translocation of PIDD1 to the nucleus upon DNA damage and activation of NF-kappa-B. PIDD-CC mediates the interaction with CRADD and the cleavage producing PIDD-CC is required for the activation of CASP2. PIDD-N remains associated with PIDD-C and PIDD-CC after cleavage. In terms of tissue distribution, ubiquitous.

The protein resides in the cytoplasm. It localises to the nucleus. Functionally, component of the DNA damage/stress response pathway that functions downstream of p53/TP53 and can either promote cell survival or apoptosis. Associated with CRADD and the CASP2 caspase, it forms the PIDDosome a complex that activates CASP2 and triggers apoptosis. Associated with IKBKG and RIPK1, it enhances sumoylation and ubiquitination of IKBKG which is important for activation of the transcription factor NF-kappa-B. In Homo sapiens (Human), this protein is p53-induced death domain-containing protein 1.